Reading from the N-terminus, the 536-residue chain is Probable E3 ubiquitin-protein ligase ARI13 (536 aa).

Residues 83–328 (KISSCGICFK…GFYKFCNVSM (246 aa)) form a TRIAD supradomain region. Zn(2+) is bound by residues cysteine 87, cysteine 90, cysteine 106, histidine 108, cysteine 111, cysteine 114, cysteine 135, cysteine 140, cysteine 180, cysteine 185, cysteine 210, cysteine 212, cysteine 217, cysteine 220, histidine 225, cysteine 230, cysteine 277, cysteine 280, cysteine 297, cysteine 299, cysteine 304, cysteine 307, histidine 314, and cysteine 324. An RING-type 1 zinc finger spans residues 87 to 140 (CGICFKTCDDGDYLISTPFCSHMFCKSCWRKYLEKNFYLVEKTQTRISCPHGAC). Residues 158 to 230 (EMYVEYILRS…MLESHKPVTC (73 aa)) form an IBR-type zinc finger. An RING-type 2; atypical zinc finger spans residues 277 to 307 (CPHCLRPADLGTKQYLRFLTCACNGRFCWKC). The RanBP2-type zinc finger occupies 495-526 (DYGGLFWLCDRCTYGNTWFHKECLMCSDDIAA).

The protein belongs to the RBR family. Ariadne subfamily. Zn(2+) is required as a cofactor.

It carries out the reaction [E2 ubiquitin-conjugating enzyme]-S-ubiquitinyl-L-cysteine + [acceptor protein]-L-lysine = [E2 ubiquitin-conjugating enzyme]-L-cysteine + [acceptor protein]-N(6)-ubiquitinyl-L-lysine.. It functions in the pathway protein modification; protein ubiquitination. In terms of biological role, might act as an E3 ubiquitin-protein ligase, or as part of E3 complex, which accepts ubiquitin from specific E2 ubiquitin-conjugating enzymes and then transfers it to substrates. This Arabidopsis thaliana (Mouse-ear cress) protein is Probable E3 ubiquitin-protein ligase ARI13 (ARI13).